A 98-amino-acid chain; its full sequence is Essential MCU regulator, mitochondrial (98 aa).

The chain crosses the membrane as a helical span at residues 52–72; it reads ITPFGLFGIIATVIPGLLIGA.

It belongs to the SMDT1/EMRE family.

It localises to the mitochondrion inner membrane. Essential regulatory subunit of the mitochondrial calcium uniporter (mcu) channel, a protein that mediates calcium uptake into mitochondria. The polypeptide is Essential MCU regulator, mitochondrial (Anopheles gambiae (African malaria mosquito)).